The primary structure comprises 349 residues: 5,10-methylenetetrahydromethanopterin reductase (349 aa).

This sequence belongs to the mer family. As to quaternary structure, homotetramer composed of two loosely associated dimers.

It localises to the cytoplasm. It carries out the reaction 5-methyl-5,6,7,8-tetrahydromethanopterin + oxidized coenzyme F420-(gamma-L-Glu)(n) + H(+) = 5,10-methylenetetrahydromethanopterin + reduced coenzyme F420-(gamma-L-Glu)(n). Its pathway is one-carbon metabolism; methanogenesis from CO(2); methyl-coenzyme M from 5,10-methylene-5,6,7,8-tetrahydromethanopterin: step 1/2. With respect to regulation, requires the presence of relatively high concentrations of either sulfate or phosphate for maximal activity. In terms of biological role, catalyzes the reversible reduction of methylene-H(4)MPT to methyl-H(4)MPT. The polypeptide is 5,10-methylenetetrahydromethanopterin reductase (Methanopyrus kandleri (strain AV19 / DSM 6324 / JCM 9639 / NBRC 100938)).